A 931-amino-acid polypeptide reads, in one-letter code: Neuropilin-2 (931 aa).

An N-terminal signal peptide occupies residues 1 to 20; it reads MDMFPLTWVFLALYFSGHEV. The Extracellular portion of the chain corresponds to 21–864; it reads RSQQDPPCGG…EKSWLYTLDP (844 aa). 3 cysteine pairs are disulfide-bonded: cysteine 28-cysteine 55, cysteine 83-cysteine 105, and cysteine 149-cysteine 175. CUB domains are found at residues 28–142 and 149–267; these read CGGR…YEIF and CSKN…YYLI. Residues asparagine 152 and asparagine 157 are each glycosylated (N-linked (GlcNAc...) asparagine). 3 residues coordinate Ca(2+): glutamate 197, aspartate 211, and aspartate 252. An intrachain disulfide couples cysteine 208 to cysteine 230. 2 disulfide bridges follow: cysteine 277–cysteine 427 and cysteine 434–cysteine 592. 2 F5/8 type C domains span residues 277–427 and 434–592; these read CNVP…LFGC and CSNM…VLGC. Over residues 298 to 310 the composition is skewed to polar residues; the sequence is TFSDGRWTPQQSR. Residues 298-317 form a disordered region; that stretch reads TFSDGRWTPQQSRLHGDDNG. Positions 601-621 are disordered; it reads VETLGPTVKSEETTTPYPMDE. N-linked (GlcNAc...) asparagine glycosylation is present at asparagine 629. The 161-residue stretch at 642-802 folds into the MAM domain; the sequence is SGFNCNFDFP…TDVPLENCME (161 aa). The segment at 819 to 854 is disordered; that stretch reads THGGEGYEDEIDDEYEGDWSNSSSSTSGAGDPSSGK. Positions 824 to 835 are enriched in acidic residues; that stretch reads GYEDEIDDEYEG. Residues 836–851 show a composition bias toward low complexity; it reads DWSNSSSSTSGAGDPS. N-linked (GlcNAc...) asparagine glycosylation is present at asparagine 839. A helical membrane pass occupies residues 865 to 889; the sequence is ILITIIAMSSLGVLLGATCAGLLLY. The Cytoplasmic segment spans residues 890-931; that stretch reads CTCSYSGLSSRSCTTLENYNFELYDGLKHKVKINHQKCCSEA.

The protein belongs to the neuropilin family. In terms of assembly, heterodimer with NRP1. Binds PLXNB1. As to expression, expressed in developing CNS, PNS and in some nonneural tissues including limb buds, developing bones, muscles, intestinal epithelium, kidney, lung and submandibular gland.

It is found in the membrane. Its function is as follows. High affinity receptor for semaphorins 3C, 3F, VEGF-165 and VEGF-145 isoforms of VEGF, and the PLGF-2 isoform of PGF. In Mus musculus (Mouse), this protein is Neuropilin-2 (Nrp2).